The primary structure comprises 117 residues: G antigen 6 (117 aa).

Residues 1–117 (MSWRGRSTYY…PEEGEKQSQC (117 aa)) form a disordered region. Acidic residues-rich tracts occupy residues 32–45 (FSDE…EEGE) and 87–96 (ECEDGPDGQE). Residues 103–117 (EEVKTPEEGEKQSQC) are compositionally biased toward basic and acidic residues.

The protein belongs to the GAGE family. Expressed in a variety of tumor tissues but not in normal tissues, except testis.

The protein is G antigen 6 (GAGE6) of Homo sapiens (Human).